The following is a 569-amino-acid chain: Mitogen-activated protein kinase 8 (569 aa).

Positions 13–304 constitute a Protein kinase domain; that stretch reads YKIQEVIGKG…AEEALADPYF (292 aa). ATP contacts are provided by residues 19–27 and Lys-42; that span reads IGKGSYGVV. The active-site Proton acceptor is Asp-139. Position 175 is a phosphothreonine (Thr-175). Positions 175–177 match the TXY motif; it reads TDY. Tyr-177 carries the post-translational modification Phosphotyrosine. The disordered stretch occupies residues 404–432; it reads TTVHSAPIPPKDHQNITSQVPQRIPGRTG.

Belongs to the protein kinase superfamily. CMGC Ser/Thr protein kinase family. MAP kinase subfamily. Dually phosphorylated on Thr-175 and Tyr-177, which activates the enzyme. In terms of tissue distribution, expressed in leaves and panicles.

The catalysed reaction is L-seryl-[protein] + ATP = O-phospho-L-seryl-[protein] + ADP + H(+). It catalyses the reaction L-threonyl-[protein] + ATP = O-phospho-L-threonyl-[protein] + ADP + H(+). Its activity is regulated as follows. Activated by threonine and tyrosine phosphorylation. The chain is Mitogen-activated protein kinase 8 (MPK8) from Oryza sativa subsp. japonica (Rice).